Reading from the N-terminus, the 644-residue chain is MFQDNPLLAQLKQQLHSQTPRAEGVVKGTEKGFGFLEVDAQKSYFIPPPQMKKVMHGDRIVAVIHSEKDRESAEPETLVEPFLTRFVGKVQKKDDRLAIVPDHPLLKDAIPCRAARGVEHDFKQGDWAVAEMRRHPLKGDRGFYAELTQFITFSDDHFVPWWVTLARHNLEKEAPDGVATEMLDEGLTRRDLTALDFVTIDSASTEDMDDALYVESTADGKLLLTVAIADPTAWIAEGSKLDKAAKVRAFTNYLPGFNIPMLPRELSDDLCSLRANEVRPVLACQMTLAADGTIEDNIEFFAATIESKAKLAYDDVSDWLEGRGSWQPGSDAIAQQITLLKDVCQRRSEWRQTHALVFKDRPDYRFVLGEKGEVLDIVAEPRRIANRIVEESMIAANICAARVLRDKLGFGVYNVHTGFDPANTEQLAALLKTHDVHVDPTEVLTLEGFCKLRRELDAQPTGFLDSRIRRFQSFAEISTEPGPHFGLGLEAYATWTSPIRKYGDMINHRLLKAIIKGETIARPQDDATVQMAERRRLNRMAERDVADWLYARFLNDKAGTDTRFAAEILDISRGGMRVRLVDNGAVAFIPAPFLHAVRDELVCSQENGTVQIKGEVVYKVTDVIDVTIAEVRMETRSIIARPAV.

The region spanning 189-516 is the RNB domain; it reads RRDLTALDFV…NHRLLKAIIK (328 aa). In terms of domain architecture, S1 motif spans 561–643; that stretch reads DTRFAAEILD…ETRSIIARPA (83 aa).

It belongs to the RNR ribonuclease family. RNase II subfamily.

The protein localises to the cytoplasm. It catalyses the reaction Exonucleolytic cleavage in the 3'- to 5'-direction to yield nucleoside 5'-phosphates.. Its function is as follows. Involved in mRNA degradation. Hydrolyzes single-stranded polyribonucleotides processively in the 3' to 5' direction. This chain is Exoribonuclease 2, found in Klebsiella pneumoniae (strain 342).